The sequence spans 172 residues: Scytalone dehydratase-like protein Arp1 (172 aa).

Y49 contributes to the substrate binding site. Active-site residues include H84 and H109. N130 lines the substrate pocket.

The protein belongs to the scytalone dehydratase family. As to quaternary structure, homotrimer. Each subunit contains an active site, located in the central part of the hydrophobic core of the monomer, which functions independently.

Its function is as follows. Scytalone dehydratase-like protein; part of the Pks2 gene cluster that mediates the formation of infectious structures (appressoria), enabling these fungi to kill insects faster. The product of the Pks2 gene cluster is different from the one of Pks1 and has still not been identified. This Metarhizium robertsii (strain ARSEF 23 / ATCC MYA-3075) (Metarhizium anisopliae (strain ARSEF 23)) protein is Scytalone dehydratase-like protein Arp1.